A 235-amino-acid chain; its full sequence is Claudin-16 (235 aa).

The Cytoplasmic portion of the chain corresponds to 1–3 (MKD). A helical membrane pass occupies residues 4 to 24 (LLQYAACFLAIFSTGFLIVAT). Over 25–79 (WTDCWMVNADDSLEVSTKCRGLWWECVTNAFDGIRTCDEYDSIYAEHPLKLVVTR) the chain is Extracellular. A helical transmembrane segment spans residues 80-100 (ALMITADILAGFGFITLLLGL). The Cytoplasmic portion of the chain corresponds to 101–115 (DCVKFLPDDPQIKVR). The helical transmembrane segment at 116-136 (LCFVAGTTLLIAGTPGIIGSV) threads the bilayer. The Extracellular segment spans residues 137 to 169 (WYAVDVYVERSSLVLHNIFLGIQYKFGWSCWLG). A helical membrane pass occupies residues 170–190 (MAGSLGCFLAGALLTCCLYLF). The Cytoplasmic portion of the chain corresponds to 191–235 (KDVGPERNYPYAMRKPYSTAGVSMAKSYKAPRTETAKMYAVDTRV). An Interaction with TJP1 motif is present at residues 233–235 (TRV).

This sequence belongs to the claudin family. In terms of assembly, can form heteropolymeric tight junction strands with other claudins. Interacts with CLDN19. Cannot form tight junction strands on its own. Interacts (via PDZ-binding motif TRV) with TJP1 (via PDZ domain). As to expression, expressed in the corticomedullary axis of the TAL, specifically in the cortex and the outer stripe of outer medulla (OSOM) zone (at protein level).

The protein localises to the cell junction. The protein resides in the tight junction. Its subcellular location is the cell membrane. The enzyme catalyses Mg(2+)(in) = Mg(2+)(out). It catalyses the reaction Ca(2+)(in) = Ca(2+)(out). It carries out the reaction Na(+)(in) = Na(+)(out). The catalysed reaction is K(+)(in) = K(+)(out). The enzyme catalyses Rb(+)(in) = Rb(+)(out). It catalyses the reaction Cs(+)(in) = Cs(+)(out). It carries out the reaction Li(+)(in) = Li(+)(out). Its function is as follows. Forms paracellular channels: coassembles with CLDN19 into tight junction strands with cation-selective channels through the strands, conveying epithelial permeability in a process known as paracellular tight junction permeability. Involved in the maintenance of ion gradients along the nephron. In the thick ascending limb (TAL) of Henle's loop, facilitates sodium paracellular permeability from the interstitial compartment to the lumen, contributing to the lumen-positive transepithelial potential that drives paracellular magnesium and calcium reabsorption. This is Claudin-16 from Mus musculus (Mouse).